The primary structure comprises 776 residues: Protein translocase subunit SecA 2 (776 aa).

Residues Gln80, 98–102, and Asp486 contribute to the ATP site; that span reads GEGKT.

It belongs to the SecA family. Monomer and homodimer. Part of the essential Sec protein translocation apparatus which comprises SecA, SecYEG and auxiliary proteins SecDF. Other proteins may also be involved.

The protein localises to the cell membrane. It is found in the cytoplasm. It carries out the reaction ATP + H2O + cellular proteinSide 1 = ADP + phosphate + cellular proteinSide 2.. In terms of biological role, part of the Sec protein translocase complex. Interacts with the SecYEG preprotein conducting channel. Has a central role in coupling the hydrolysis of ATP to the transfer of proteins into and across the cell membrane, serving as an ATP-driven molecular motor driving the stepwise translocation of polypeptide chains across the membrane. This chain is Protein translocase subunit SecA 2, found in Listeria innocua serovar 6a (strain ATCC BAA-680 / CLIP 11262).